A 1262-amino-acid polypeptide reads, in one-letter code: Structural maintenance of chromosomes protein 1 (1262 aa).

Positions 171–497 form a coiled coil; sequence SRSHEFQAEY…VAVVRQLSEA (327 aa). The region spanning 524–642 is the SMC hinge domain; sequence SVYGRLVDLC…ESQEDAKQLA (119 aa). Residues 680 to 937 adopt a coiled-coil conformation; the sequence is KKWDEKVVKQ…RLESLLTKKQ (258 aa). Residues 965 to 994 are disordered; that stretch reads EYEEDDGDDTASQSSQSATDGPSVSEEQIQ. Over residues 974–991 the composition is skewed to polar residues; it reads TASQSSQSATDGPSVSEE. Residues 1017–1086 are a coiled coil; sequence DGVRQMSNRL…QQFEKVKTDR (70 aa). The DA-box motif lies at 1148–1183; that stretch reads LSGGEKTIAALALLFAVHGRNPAPFFVLDEIDAALD.

This sequence belongs to the SMC family. SMC1 subfamily. In terms of assembly, component of the cohesin complex, composed of the smc-1 and smc-3 heterodimer attached via their SMC hinge domain, scc-1 which links them, and scc-3. Interacts with smc-3, scc-1, scc-3 and tim-1.

It is found in the nucleus. Its subcellular location is the chromosome. Involved in chromosome cohesion during cell cycle and in DNA repair. Required for chromosome segregation during mitosis. Central component of cohesin complex. The cohesin complex is required for the cohesion of sister chromatids after DNA replication. The cohesin complex apparently forms a large proteinaceous ring within which sister chromatids can be trapped. At anaphase, the complex is cleaved and dissociates from chromatin, allowing sister chromatids to segregate. This chain is Structural maintenance of chromosomes protein 1, found in Caenorhabditis elegans.